The sequence spans 1682 residues: Merozoite surface protein 1 (1682 aa).

Positions 1-19 (MKIIFFLCSFLFFIINTQC) are cleaved as a signal peptide. The segment at 68-110 (AVSTQSAKNPPGATVPSGTASTKGAIRSPGAANPSDDSSDSDA) is disordered. N-linked (GlcNAc...) asparagine glycans are attached at residues asparagine 233, asparagine 462, asparagine 528, and asparagine 599. The tract at residues 696–729 (SETTEDGGHSTHTLSQSGETEVTEETEETVGHTT) is disordered. Residues asparagine 785, asparagine 881, asparagine 901, asparagine 947, asparagine 1071, and asparagine 1178 are each glycosylated (N-linked (GlcNAc...) asparagine). The interval 870–918 (ITGTSSTSSPGNTTVNTAQSATHSNSQNQQSNASSTNTQNGVAVSSGPA) is disordered. A compositionally biased stretch (low complexity) spans 871–909 (TGTSSTSSPGNTTVNTAQSATHSNSQNQQSNASSTNTQN). Disordered regions lie at residues 1212–1241 (TPPQ…TQIP) and 1433–1453 (KEFP…DEQK). Residues 1227 to 1241 (VSGSSGSTKEETQIP) show a composition bias toward polar residues. A compositionally biased stretch (pro residues) spans 1437–1446 (SSPPTTPPSP). Asparagine 1569 is a glycosylation site (N-linked (GlcNAc...) asparagine). EGF-like domains follow at residues 1573-1613 (HQCV…VENP) and 1614-1661 (NPTC…IFCS). 6 disulfides stabilise this stretch: cysteine 1575/cysteine 1586, cysteine 1580/cysteine 1596, cysteine 1598/cysteine 1609, cysteine 1617/cysteine 1630, cysteine 1624/cysteine 1644, and cysteine 1646/cysteine 1660. Serine 1661 carries GPI-anchor amidated serine lipidation. The propeptide at 1662–1682 (SSNFLGISFLLILMLILYSFI) is removed in mature form.

In terms of assembly, forms a complex composed of subunits p83, p30, p38, and p42 which remain non-covalently associated; the complex is formed at the merozoite surface prior to egress from host erythrocytes. Forms a complex composed of processed MSP1 subunits, MSP6 subunit p36 and MSP7; the complex is formed at the merozoite surface prior to egress from host erythrocytes. Within the complex, interacts (via subunit p38) with MSP6 subunit p36 and (via subunits p83, p30 and p38) with MSP7 (via subunit p22). Forms a complex composed of MSP1, MSP6, DBLMSP1 and DBLMSP2. Within the complex, interacts (via subunit p38) with DBLMSP1 and DBLMSP2. Forms a complex composed of MSP1, and rhoptry proteins RhopH3, RAP1 and CLAG9/RhopH3. Within the complex, interacts (via subunits p42 and p19) with RhopH3 (via C-terminus). Forms a complex composed of MSP1, MSP6, MSP7, MSP9 and MSP3; within the complex, MSP6 and MSP9 mediate the binding to the host erythrocyte. Interacts (via subunits p19 and p42) with MSP9; the interaction is direct; MSP1 subunits p19 or p42, and MSP9 form a co-ligand complex that interacts with host SLC4A1/Band 3 protein. May interact with PFD6. Interacts with host spectrin. As to quaternary structure, interacts with host glycophorin GYPA in a sialic acid-independent manner. Interacts with host proinflammatory cytokine S100P; the interaction blocks S100P inflammatory and chemotactic activities. In terms of assembly, interacts with host SLC4A1/Band 3 (via 5ABC region) on the host erythrocyte surface in a sialic acid-independent manner. Post-translationally, the p190 precursor is cleaved by SUB1 prior to merozoite egress into 4 subunits p83, p30, p38, and p42 which remain non-covalently associated. SUB1-mediated proteolytic cleavage occurs in an orderly manner; the first cleavage occurs at the p30/p38 site, followed by cleavage at the p83/p30 site, the last cleavage occurs at the p38/p42 site. The order of cleavage is essential for parasite viability. SUB1-mediated processing is essential for merozoite egress. In a second processing step during erythrocyte invasion, p42 is cleaved by SUB2 into p33 and p19; the latter remains attached to the merozoite surface via its GPI-anchor and is endocytosed during the subsequent ring stage.

Its subcellular location is the cell membrane. It localises to the secreted. It is found in the vacuole membrane. Functionally, during the asexual blood stage, involved in merozoite egress from host erythrocytes possibly via its interaction with the host cytoskeleton protein spectrin resulting in the destabilization of the host cytoskeleton and thus leading to erythrocyte cell membrane rupture. Involved in the binding to host erythrocytes and is required for host erythrocyte invasion. By binding to host proinflammatory cytokine S100P may interfere with host immune responses. In terms of biological role, involved in merozoite invasion of host erythrocytes. May play a role in the biogenesis and/or function of the food vacuole during the intraerythrocytic development. In Plasmodium falciparum (isolate ro-33 / Ghana), this protein is Merozoite surface protein 1.